The following is a 104-amino-acid chain: Large ribosomal subunit protein bL21 (104 aa).

This sequence belongs to the bacterial ribosomal protein bL21 family. In terms of assembly, part of the 50S ribosomal subunit. Contacts protein L20.

In terms of biological role, this protein binds to 23S rRNA in the presence of protein L20. The polypeptide is Large ribosomal subunit protein bL21 (Alkalilimnicola ehrlichii (strain ATCC BAA-1101 / DSM 17681 / MLHE-1)).